Here is a 197-residue protein sequence, read N- to C-terminus: Thymidylate kinase (197 aa).

7 to 14 contacts ATP; it reads GIDGSGKS.

This sequence belongs to the thymidylate kinase family.

The catalysed reaction is dTMP + ATP = dTDP + ADP. Phosphorylation of dTMP to form dTDP in both de novo and salvage pathways of dTTP synthesis. This chain is Thymidylate kinase, found in Thermotoga sp. (strain RQ2).